The primary structure comprises 393 residues: Prokineticin receptor 1 (393 aa).

The Extracellular portion of the chain corresponds to 1 to 63; the sequence is MEITMGVMDE…NSRTFFAAKI (63 aa). N11, N14, and N36 each carry an N-linked (GlcNAc...) asparagine glycan. The chain crosses the membrane as a helical span at residues 64-84; that stretch reads VIGMALVGIMLVCGIGNFIFI. Residues 85–98 lie on the Cytoplasmic side of the membrane; that stretch reads AALARYKKLRNLTN. Residues 99–119 traverse the membrane as a helical segment; sequence LLIANLAISDFLVAIVCCPFE. At 120-145 the chain is on the extracellular side; it reads MDYYVVRQLSWEHGHVLCASVNYLRT. C137 and C217 are joined by a disulfide. A helical membrane pass occupies residues 146-166; it reads VSLYVSTNALLAIAIDRYLAI. Residues 167–179 are Cytoplasmic-facing; the sequence is VHPLRPRMKYQTA. The helical transmembrane segment at 180–200 threads the bilayer; that stretch reads TGLIALVWVVSILVAIPSAYF. Topologically, residues 201-232 are extracellular; that stretch reads TTETVLVIVKSQEKIFCGQIWPVDQQIYYKSY. A helical transmembrane segment spans residues 233–253; that stretch reads FLFIFGIEFVGPVVTMTLCYA. Residues 254–282 lie on the Cytoplasmic side of the membrane; that stretch reads RISRELWFKAVPGFQTEQIRKRLRCRRKT. The chain crosses the membrane as a helical span at residues 283-303; it reads VLVLMCILTAYVLCWAPFYGF. At 304–322 the chain is on the extracellular side; sequence AIVRDFFPTVFVKEKHYLT. The chain crosses the membrane as a helical span at residues 323 to 343; that stretch reads AFYVVECIAMSNSMINTVCFV. The Cytoplasmic portion of the chain corresponds to 344 to 393; that stretch reads TVKNNTIKYFKKIMLLHWKASYNGSKSSGDLDLKTTGVPATEEVDCIGLK.

This sequence belongs to the G-protein coupled receptor 1 family.

Its subcellular location is the cell membrane. Functionally, receptor for prokineticin 1. Exclusively coupled to the G(q) subclass of heteromeric G proteins. Activation leads to mobilization of calcium, stimulation of phosphoinositide turnover and activation of p44/p42 mitogen-activated protein kinase. May play a role during early pregnancy. In Bos taurus (Bovine), this protein is Prokineticin receptor 1 (PROKR1).